A 382-amino-acid chain; its full sequence is ATP phosphoribosyltransferase regulatory subunit (382 aa).

It belongs to the class-II aminoacyl-tRNA synthetase family. HisZ subfamily. As to quaternary structure, heteromultimer composed of HisG and HisZ subunits.

The protein localises to the cytoplasm. Its pathway is amino-acid biosynthesis; L-histidine biosynthesis; L-histidine from 5-phospho-alpha-D-ribose 1-diphosphate: step 1/9. Required for the first step of histidine biosynthesis. May allow the feedback regulation of ATP phosphoribosyltransferase activity by histidine. In Burkholderia thailandensis (strain ATCC 700388 / DSM 13276 / CCUG 48851 / CIP 106301 / E264), this protein is ATP phosphoribosyltransferase regulatory subunit.